The following is a 351-amino-acid chain: D-alanine--D-alanine ligase (351 aa).

One can recognise an ATP-grasp domain in the interval 135–343 (NQIFLQSGQK…MEEVFSDLIE (209 aa)). Residue 167–222 (LETLGFPQFLKPVEGGSSVSVYKITNREQLKEKLALIFESDSKVMSQSFLTGIEVS) participates in ATP binding. Asp298, Glu310, and Asn312 together coordinate Mg(2+).

This sequence belongs to the D-alanine--D-alanine ligase family. Mg(2+) is required as a cofactor. Mn(2+) serves as cofactor.

Its subcellular location is the cytoplasm. It carries out the reaction 2 D-alanine + ATP = D-alanyl-D-alanine + ADP + phosphate + H(+). Its pathway is cell wall biogenesis; peptidoglycan biosynthesis. Its function is as follows. Cell wall formation. The polypeptide is D-alanine--D-alanine ligase (Leptospira interrogans serogroup Icterohaemorrhagiae serovar Lai (strain 56601)).